The primary structure comprises 138 residues: Large ribosomal subunit protein bL17 (138 aa).

The protein belongs to the bacterial ribosomal protein bL17 family. As to quaternary structure, part of the 50S ribosomal subunit. Contacts protein L32.

This Jannaschia sp. (strain CCS1) protein is Large ribosomal subunit protein bL17.